The primary structure comprises 82 residues: Small ribosomal subunit protein bS16 (82 aa).

Belongs to the bacterial ribosomal protein bS16 family.

The protein is Small ribosomal subunit protein bS16 of Glaesserella parasuis serovar 5 (strain SH0165) (Haemophilus parasuis).